Consider the following 185-residue polypeptide: Ribosome-recycling factor (185 aa).

Belongs to the RRF family.

The protein localises to the cytoplasm. Its function is as follows. Responsible for the release of ribosomes from messenger RNA at the termination of protein biosynthesis. May increase the efficiency of translation by recycling ribosomes from one round of translation to another. The chain is Ribosome-recycling factor from Pseudomonas putida (strain ATCC 700007 / DSM 6899 / JCM 31910 / BCRC 17059 / LMG 24140 / F1).